The sequence spans 446 residues: Endoplasmic reticulum membrane adapter protein XK (446 aa).

Topologically, residues 1-2 (MK) are cytoplasmic. A helical transmembrane segment spans residues 3-23 (FPASVIASVFLFVAETAAALY). Topologically, residues 24-37 (LSSTYRSAGDRMWQ) are extracellular. A helical membrane pass occupies residues 38 to 58 (VLTLLFSLMPCALVQFTLLFV). Over 59-68 (HRDLSRDRPL) the chain is Cytoplasmic. The helical transmembrane segment at 69-89 (ALLMHLLQLGPLYRCCEVFCI) threads the bilayer. The Extracellular portion of the chain corresponds to 90-140 (YCQSDQNEEPYVSITKKRQMPKDGLSEEVEKEVGQAEGKLITHRSAFSRAS). Ser-115 is modified (phosphoserine). Residues 141 to 161 (VIQAFLGSAPQLTLQLYITVL) form a helical membrane-spanning segment. At 162–171 (EQNITTGRCF) the chain is on the cytoplasmic side. A helical membrane pass occupies residues 172–192 (IMTLSLLSIVYGALRCNILAI). At 193-208 (KIKYDEYEVKVKPLAY) the chain is on the extracellular side. The chain crosses the membrane as a helical span at residues 209 to 229 (VCIFLWRSFEIATRVIVLVLF). Residues 230 to 235 (TSVLKI) lie on the Cytoplasmic side of the membrane. A helical transmembrane segment spans residues 236-256 (WVVAVILVNFFSFFLYPWIVF). At 257–277 (WCSGSPFPENIEKALSRVGTT) the chain is on the extracellular side. A helical membrane pass occupies residues 278-298 (IVLCFLTLLYAGINMFCWSAV). Topologically, residues 299–317 (QLKIDNPELISKSQNWYRL) are cytoplasmic. The helical transmembrane segment at 318-338 (LIYYMTRFIENSVLLLLWYFF) threads the bilayer. At 339 to 349 (KTDIYMYVCAP) the chain is on the extracellular side. A helical membrane pass occupies residues 350-370 (LLILQLLIGYCTGILFMLVFY). Over 371–446 (QFFHPCKKLF…IWTAVDLCSA (76 aa)) the chain is Cytoplasmic.

This sequence belongs to the XK family. In terms of assembly, heterodimer with Kell; disulfide-linked. Interacts with VPS13A.

The protein resides in the endoplasmic reticulum membrane. In terms of biological role, recruits the lipid transfer protein VPS13A from lipid droplets to the endoplasmic reticulum (ER) membrane. The chain is Endoplasmic reticulum membrane adapter protein XK from Mus musculus (Mouse).